The primary structure comprises 585 residues: Aspartate--tRNA ligase (585 aa).

Residue Glu-171 participates in L-aspartate binding. The tract at residues 195–198 (QLFK) is aspartate. Arg-217 contributes to the L-aspartate binding site. ATP-binding positions include 217 to 219 (RDE) and Gln-226. His-448 is an L-aspartate binding site. Position 482 (Glu-482) interacts with ATP. Arg-489 is an L-aspartate binding site. Position 534 to 537 (534 to 537 (GLDR)) interacts with ATP.

Belongs to the class-II aminoacyl-tRNA synthetase family. Type 1 subfamily. Homodimer.

Its subcellular location is the cytoplasm. It catalyses the reaction tRNA(Asp) + L-aspartate + ATP = L-aspartyl-tRNA(Asp) + AMP + diphosphate. Catalyzes the attachment of L-aspartate to tRNA(Asp) in a two-step reaction: L-aspartate is first activated by ATP to form Asp-AMP and then transferred to the acceptor end of tRNA(Asp). The protein is Aspartate--tRNA ligase of Histophilus somni (strain 129Pt) (Haemophilus somnus).